The primary structure comprises 292 residues: Large ribosomal subunit protein bL19m (292 aa).

The tract at residues 40-61 is disordered; the sequence is PVRQQSTGPSEPGAFQPPPKPV. Serine 77 bears the Phosphoserine mark.

This sequence belongs to the bacterial ribosomal protein bL19 family. As to quaternary structure, component of the mitochondrial ribosome large subunit (39S) which comprises a 16S rRNA and about 50 distinct proteins.

The protein localises to the mitochondrion. This chain is Large ribosomal subunit protein bL19m (MRPL19), found in Pongo abelii (Sumatran orangutan).